A 434-amino-acid chain; its full sequence is Citrate synthase (434 aa).

Active-site residues include H310 and D368.

This sequence belongs to the citrate synthase family.

It catalyses the reaction oxaloacetate + acetyl-CoA + H2O = citrate + CoA + H(+). Its pathway is carbohydrate metabolism; tricarboxylic acid cycle; isocitrate from oxaloacetate: step 1/2. The sequence is that of Citrate synthase (gltA) from Bradyrhizobium diazoefficiens (strain JCM 10833 / BCRC 13528 / IAM 13628 / NBRC 14792 / USDA 110).